The chain runs to 427 residues: Enolase (427 aa).

Residue Gln-162 coordinates (2R)-2-phosphoglycerate. The Proton donor role is filled by Glu-204. Mg(2+) is bound by residues Asp-241, Glu-284, and Asp-311. Positions 336, 365, 366, and 387 each coordinate (2R)-2-phosphoglycerate. Catalysis depends on Lys-336, which acts as the Proton acceptor.

It belongs to the enolase family. It depends on Mg(2+) as a cofactor.

It localises to the cytoplasm. The protein localises to the secreted. The protein resides in the cell surface. It carries out the reaction (2R)-2-phosphoglycerate = phosphoenolpyruvate + H2O. It functions in the pathway carbohydrate degradation; glycolysis; pyruvate from D-glyceraldehyde 3-phosphate: step 4/5. In terms of biological role, catalyzes the reversible conversion of 2-phosphoglycerate (2-PG) into phosphoenolpyruvate (PEP). It is essential for the degradation of carbohydrates via glycolysis. This is Enolase from Natranaerobius thermophilus (strain ATCC BAA-1301 / DSM 18059 / JW/NM-WN-LF).